Reading from the N-terminus, the 1372-residue chain is DNA-directed RNA polymerase subunit beta' (1372 aa).

4 residues coordinate Zn(2+): C69, C71, C84, and C87. Positions 460, 462, and 464 each coordinate Mg(2+). Residues C808, C882, C889, and C892 each contribute to the Zn(2+) site.

Belongs to the RNA polymerase beta' chain family. The RNAP catalytic core consists of 2 alpha, 1 beta, 1 beta' and 1 omega subunit. When a sigma factor is associated with the core the holoenzyme is formed, which can initiate transcription. Requires Mg(2+) as cofactor. Zn(2+) serves as cofactor.

The enzyme catalyses RNA(n) + a ribonucleoside 5'-triphosphate = RNA(n+1) + diphosphate. Its function is as follows. DNA-dependent RNA polymerase catalyzes the transcription of DNA into RNA using the four ribonucleoside triphosphates as substrates. This Rickettsia prowazekii (strain Madrid E) protein is DNA-directed RNA polymerase subunit beta'.